The following is a 551-amino-acid chain: Solute carrier family 22 member 3 (551 aa).

A helical transmembrane segment spans residues 21 to 41; the sequence is VFLLLCLTGVTFAFLFVGVVF. Asparagine 72, asparagine 99, and asparagine 114 each carry an N-linked (GlcNAc...) asparagine glycan. Residues 177-197 form a helical membrane-spanning segment; the sequence is LIVYLISCFGVGITGVVVAFA. Asparagine 199 is a glycosylation site (N-linked (GlcNAc...) asparagine). Helical transmembrane passes span 236 to 256 and 264 to 284; these read IVGI…PGIA and GIQL…WVVP. Residues 284–288 carry the Proline-rich sequence motif; sequence PESPR. N-linked (GlcNAc...) asparagine glycosylation is present at asparagine 317. Helical transmembrane passes span 376-396, 463-483, and 493-513; these read MDFF…LLTI, FGVS…PFLL, and LPLI…MLLP.

Belongs to the major facilitator (TC 2.A.1) superfamily. Organic cation transporter (TC 2.A.1.19) family. In terms of tissue distribution, highly expressed in placenta. Expressed in intestine, hear, kidney and lung. Widely expressed in brain, particularly in hippocampus, cerebellum, cerebral cortex. In the brain, expressed predominantly in regions located at the brain-cerebrospinal fluid border, with expression extending to regions that belong to monoaminergic pathways such as raphe nuclei, striatum and thalamus. In brain, expressed in neurons and glial cells of amygdala. Expression is low in kidney and lung and undetectable in liver. Expressed in Sertoli cells in testis. Expressed in tracheal and bronchial epithelium of the respiratory tract, where it localizes to the apical membrane of ciliated and brush cells, and in basal cells.

The protein localises to the cell membrane. It is found in the apical cell membrane. Its subcellular location is the basolateral cell membrane. The protein resides in the mitochondrion membrane. It localises to the endomembrane system. The protein localises to the nucleus membrane. It is found in the nucleus outer membrane. It catalyses the reaction (R)-noradrenaline(out) = (R)-noradrenaline(in). The catalysed reaction is (R)-adrenaline(out) = (R)-adrenaline(in). It carries out the reaction serotonin(out) = serotonin(in). The enzyme catalyses dopamine(out) = dopamine(in). It catalyses the reaction histamine(out) = histamine(in). The catalysed reaction is tyramine(in) = tyramine(out). It carries out the reaction guanidine(out) = guanidine(in). The enzyme catalyses agmatine(out) = agmatine(in). It catalyses the reaction spermidine(in) = spermidine(out). The catalysed reaction is L-histidyl-L-proline diketopiperazine(in) = L-histidyl-L-proline diketopiperazine(out). It carries out the reaction (R)-salsolinol(in) = (R)-salsolinol(out). Functionally, electrogenic voltage-dependent transporter that mediates the transport of a variety of organic cations such as endogenous bioactive amines, cationic drugs and xenobiotics. Cation cellular uptake or release is driven by the electrochemical potential, i.e. membrane potential and concentration gradient. Functions as a Na(+)- and Cl(-)-independent, bidirectional uniporter. Implicated in neuronal monoamine neurotransmitters cellular uptake such as dopamine, adrenaline/epinephrine, noradrenaline/norepinephrine, histamine, serotonin and tyramine, thereby supporting a role in homeostatic regulation of aminergic neurotransmission in the brain. Transports dopaminergic neuromodulators cyclo(his-pro) and salsolinol with low efficiency. May be involved in the uptake and disposition of cationic compounds by renal clearance from the blood flow. May contribute to regulate the transport of cationic compounds in testis across the blood-testis-barrier. Mediates the transport of polyamine spermidine and putrescine. Mediates the bidirectional transport of polyamine agmatine. Also transports guanidine. May also mediate intracellular transport of organic cations, thereby playing a role in amine metabolism and intracellular signaling. The protein is Solute carrier family 22 member 3 of Rattus norvegicus (Rat).